A 358-amino-acid polypeptide reads, in one-letter code: UDP-N-acetylglucosamine--N-acetylmuramyl-(pentapeptide) pyrophosphoryl-undecaprenol N-acetylglucosamine transferase (358 aa).

Residues 11–13, asparagine 124, arginine 164, serine 195, and glutamine 291 contribute to the UDP-N-acetyl-alpha-D-glucosamine site; that span reads TGG.

It belongs to the glycosyltransferase 28 family. MurG subfamily.

It is found in the cell inner membrane. The enzyme catalyses di-trans,octa-cis-undecaprenyl diphospho-N-acetyl-alpha-D-muramoyl-L-alanyl-D-glutamyl-meso-2,6-diaminopimeloyl-D-alanyl-D-alanine + UDP-N-acetyl-alpha-D-glucosamine = di-trans,octa-cis-undecaprenyl diphospho-[N-acetyl-alpha-D-glucosaminyl-(1-&gt;4)]-N-acetyl-alpha-D-muramoyl-L-alanyl-D-glutamyl-meso-2,6-diaminopimeloyl-D-alanyl-D-alanine + UDP + H(+). The protein operates within cell wall biogenesis; peptidoglycan biosynthesis. Its function is as follows. Cell wall formation. Catalyzes the transfer of a GlcNAc subunit on undecaprenyl-pyrophosphoryl-MurNAc-pentapeptide (lipid intermediate I) to form undecaprenyl-pyrophosphoryl-MurNAc-(pentapeptide)GlcNAc (lipid intermediate II). This chain is UDP-N-acetylglucosamine--N-acetylmuramyl-(pentapeptide) pyrophosphoryl-undecaprenol N-acetylglucosamine transferase, found in Leptospira interrogans serogroup Icterohaemorrhagiae serovar copenhageni (strain Fiocruz L1-130).